The chain runs to 165 residues: Neurotrophin-3 (165 aa).

An N-terminal signal peptide occupies residues 1-3 (IQS). A propeptide spanning residues 4 to 119 (TSMDQGSLSE…VLTXTSXXXR (116 aa)) is cleaved from the precursor.

The protein belongs to the NGF-beta family.

The protein resides in the secreted. Its function is as follows. Seems to promote the survival of visceral and proprioceptive sensory neurons. The protein is Neurotrophin-3 (NTF3) of Tropidophis haetianus (Haitian dwarf boa).